The primary structure comprises 157 residues: Chromophore lyase CpcS/CpeS 1 (157 aa).

Belongs to the CpcS/CpeS biliprotein lyase family.

It localises to the plastid. The protein localises to the organellar chromatophore. Covalently attaches a chromophore to Cys residue(s) of phycobiliproteins. This Paulinella chromatophora protein is Chromophore lyase CpcS/CpeS 1.